We begin with the raw amino-acid sequence, 328 residues long: Malate dehydrogenase (328 aa).

Gly16 to Ser22 serves as a coordination point for NAD(+). 2 residues coordinate substrate: Arg97 and Arg103. NAD(+) contacts are provided by residues Asn110, Gln117, and Val134–Asn136. Substrate-binding residues include Asn136 and Arg167. His192 functions as the Proton acceptor in the catalytic mechanism.

This sequence belongs to the LDH/MDH superfamily. MDH type 2 family. In terms of assembly, homotetramer.

The catalysed reaction is (S)-malate + NAD(+) = oxaloacetate + NADH + H(+). With respect to regulation, citrate activates the enzyme in the oxidation of malate to oxaloacetate and inhibits it in the reverse reaction. Functionally, catalyzes the reversible oxidation of malate to oxaloacetate. Exhibits higher catalytic efficiency for oxaloacetate reduction than for malate oxidation in vitro. Almost equally active both for NADH and NADPH on the bases of the kcat values at pH 6.5, but catalytic efficiency for oxaloacetate reduction is 50-fold higher with NADH. The sequence is that of Malate dehydrogenase from Corynebacterium glutamicum (strain ATCC 13032 / DSM 20300 / JCM 1318 / BCRC 11384 / CCUG 27702 / LMG 3730 / NBRC 12168 / NCIMB 10025 / NRRL B-2784 / 534).